Consider the following 196-residue polypeptide: Small ribosomal subunit protein uS4c (196 aa).

The interval 16-36 is disordered; the sequence is GALPGLTRKTPKSGSNLKKKF. Residues 89-169 enclose the S4 RNA-binding domain; the sequence is MRLDNILFRL…LPKHLTIDTL (81 aa).

Belongs to the universal ribosomal protein uS4 family. As to quaternary structure, part of the 30S ribosomal subunit. Contacts protein S5. The interaction surface between S4 and S5 is involved in control of translational fidelity.

The protein resides in the plastid. It localises to the chloroplast. Functionally, one of the primary rRNA binding proteins, it binds directly to 16S rRNA where it nucleates assembly of the body of the 30S subunit. With S5 and S12 plays an important role in translational accuracy. The sequence is that of Small ribosomal subunit protein uS4c (rps4) from Cinna latifolia (Drooping woodreed).